A 396-amino-acid polypeptide reads, in one-letter code: MVRGALRGGRPMRGGIRPPFKKTFVPRHPFDLTLAEVFFPKVPSAGAVDDSALTAALLKRNQDLSPTPSEQTAIGNLVTKVQAVLDNLVVAPGDLTTCQLEEVRQVGSFKKGTILTGNNVADVVVILKTLPTKEAVDALAKKVEADLKASMKTEVLTKGDQHTVQIHERGFDIANVHAKVRILIATLPQNLRKLEPEIHLDHKLMQSHLAAIRHTRWFEENAHHSSIKVLIRILKDLTRRFDAFSPLSAWMLDLIAHLAIMNNPSRQALPINLAFRRVFQLLSAGLFLPGSAGITDPTEPGHIRVHTAMTLEQQDVCCYTSQTLLRVLAHGGYKHILGLEGNTSVVREMSVWNGVCISPLTAVYEKPTDKKEGDLEEDIDMIENENEEEGSDDGAE.

Residues 22-379 enclose the DZF domain; the sequence is KTFVPRHPFD…KKEGDLEEDI (358 aa). The disordered stretch occupies residues 367-396; sequence PTDKKEGDLEEDIDMIENENEEEGSDDGAE. Residues 374–396 are compositionally biased toward acidic residues; the sequence is DLEEDIDMIENENEEEGSDDGAE.

The protein localises to the nucleus. Its function is as follows. May regulate transcription of undefined genes. The protein is Interleukin enhancer-binding factor 2 homolog of Drosophila melanogaster (Fruit fly).